The sequence spans 206 residues: Small ribosomal subunit protein uS4 (206 aa).

In terms of domain architecture, S4 RNA-binding spans 96-156; it reads SRLDNVVYRM…EKSKNQLRIQ (61 aa).

Belongs to the universal ribosomal protein uS4 family. In terms of assembly, part of the 30S ribosomal subunit. Contacts protein S5. The interaction surface between S4 and S5 is involved in control of translational fidelity.

One of the primary rRNA binding proteins, it binds directly to 16S rRNA where it nucleates assembly of the body of the 30S subunit. Functionally, with S5 and S12 plays an important role in translational accuracy. The protein is Small ribosomal subunit protein uS4 of Teredinibacter turnerae (strain ATCC 39867 / T7901).